Reading from the N-terminus, the 134-residue chain is D-ribose pyranase (134 aa).

The Proton donor role is filled by histidine 20. Substrate contacts are provided by residues aspartate 28, histidine 99, and 123–125 (YSN).

It belongs to the RbsD / FucU family. RbsD subfamily. Homodecamer.

The protein localises to the cytoplasm. It catalyses the reaction beta-D-ribopyranose = beta-D-ribofuranose. Its pathway is carbohydrate metabolism; D-ribose degradation; D-ribose 5-phosphate from beta-D-ribopyranose: step 1/2. Its function is as follows. Catalyzes the interconversion of beta-pyran and beta-furan forms of D-ribose. This is D-ribose pyranase from Staphylococcus aureus (strain Mu3 / ATCC 700698).